Reading from the N-terminus, the 428-residue chain is MSDNMNIIDELQWRGLINQSTDLEALKEATQNPITLYCGFDPTGSSLHAGHLVPLIMLKRFQQFGHRPITLAGGATGMIGDPRDVGERSMLTEEQIGENMVAIKKQLEAFVDFTEDSDVDSPAVMVNNADWISQMNVIEYLRDVGKNFSLNTMLDRDTVKRRLESDGISYTEFSYMLLQANDYVHLHNEFDCVLQIGGGDQWGNIVSGVDLNRRVNGAKVHGLTVPLVTDAEGNKFGKSTGGGKLWLDPQLTSPYSWYQYFINAGDSVVIDYLRWFTFLSQEEIAELERKVAEEPFKREAQRVLAREMTTLVHGAAATEAVELAAQALFGKAELQDLDEPTLASALQETEVAEVGADATILDLLVESGLEKSKGAARRTVGEGGAYVNNQRIEDIEWSPSAEELLHGSWLVLRKGKKRFAGARVGASS.

Tyr-37 is a binding site for L-tyrosine. The 'HIGH' region signature appears at 42 to 51 (PTGSSLHAGH). L-tyrosine is bound by residues Tyr-175 and Gln-179. A 'KMSKS' region motif is present at residues 235-239 (KFGKS). Lys-238 contacts ATP. The 58-residue stretch at 358–415 (ATILDLLVESGLEKSKGAARRTVGEGGAYVNNQRIEDIEWSPSAEELLHGSWLVLRKG) folds into the S4 RNA-binding domain.

It belongs to the class-I aminoacyl-tRNA synthetase family. TyrS type 1 subfamily. As to quaternary structure, homodimer.

The protein localises to the cytoplasm. The catalysed reaction is tRNA(Tyr) + L-tyrosine + ATP = L-tyrosyl-tRNA(Tyr) + AMP + diphosphate + H(+). Its function is as follows. Catalyzes the attachment of tyrosine to tRNA(Tyr) in a two-step reaction: tyrosine is first activated by ATP to form Tyr-AMP and then transferred to the acceptor end of tRNA(Tyr). This is Tyrosine--tRNA ligase from Corynebacterium jeikeium (strain K411).